A 437-amino-acid chain; its full sequence is Phosphomethylpyrimidine synthase (437 aa).

Residues asparagine 69, methionine 98, tyrosine 127, histidine 163, 185-187 (SRG), 226-229 (DACR), and glutamate 265 contribute to the substrate site. Histidine 269 is a Zn(2+) binding site. Residue tyrosine 292 participates in substrate binding. Histidine 333 is a binding site for Zn(2+). 3 residues coordinate [4Fe-4S] cluster: cysteine 409, cysteine 412, and cysteine 416.

This sequence belongs to the ThiC family. The cofactor is [4Fe-4S] cluster.

The catalysed reaction is 5-amino-1-(5-phospho-beta-D-ribosyl)imidazole + S-adenosyl-L-methionine = 4-amino-2-methyl-5-(phosphooxymethyl)pyrimidine + CO + 5'-deoxyadenosine + formate + L-methionine + 3 H(+). Its pathway is cofactor biosynthesis; thiamine diphosphate biosynthesis. Catalyzes the synthesis of the hydroxymethylpyrimidine phosphate (HMP-P) moiety of thiamine from aminoimidazole ribotide (AIR) in a radical S-adenosyl-L-methionine (SAM)-dependent reaction. In Clostridium botulinum (strain ATCC 19397 / Type A), this protein is Phosphomethylpyrimidine synthase.